We begin with the raw amino-acid sequence, 60 residues long: Large ribosomal subunit protein bL32 (60 aa).

It belongs to the bacterial ribosomal protein bL32 family.

The protein is Large ribosomal subunit protein bL32 of Geobacter sulfurreducens (strain ATCC 51573 / DSM 12127 / PCA).